Consider the following 338-residue polypeptide: Lipoate-protein ligase A (338 aa).

Residues 29 to 216 (PATQRVLFLW…AFFAHYGERV (188 aa)) form the BPL/LPL catalytic domain. ATP contacts are provided by residues arginine 71, 76-79 (GAVF), and lysine 134. Lysine 134 lines the (R)-lipoate pocket.

This sequence belongs to the LplA family. In terms of assembly, monomer.

It localises to the cytoplasm. The enzyme catalyses L-lysyl-[lipoyl-carrier protein] + (R)-lipoate + ATP = N(6)-[(R)-lipoyl]-L-lysyl-[lipoyl-carrier protein] + AMP + diphosphate + H(+). The protein operates within protein modification; protein lipoylation via exogenous pathway; protein N(6)-(lipoyl)lysine from lipoate: step 1/2. It participates in protein modification; protein lipoylation via exogenous pathway; protein N(6)-(lipoyl)lysine from lipoate: step 2/2. Its function is as follows. Catalyzes both the ATP-dependent activation of exogenously supplied lipoate to lipoyl-AMP and the transfer of the activated lipoyl onto the lipoyl domains of lipoate-dependent enzymes. This chain is Lipoate-protein ligase A, found in Salmonella dublin (strain CT_02021853).